The following is an 88-amino-acid chain: Small ribosomal subunit protein bS20 (88 aa).

It belongs to the bacterial ribosomal protein bS20 family.

Binds directly to 16S ribosomal RNA. The sequence is that of Small ribosomal subunit protein bS20 from Bartonella quintana (strain Toulouse) (Rochalimaea quintana).